Here is a 372-residue protein sequence, read N- to C-terminus: Ribosomal RNA small subunit methyltransferase H (372 aa).

Residues 44 to 46, aspartate 63, leucine 97, aspartate 111, and glutamine 118 each bind S-adenosyl-L-methionine; that span reads GGH. Residues 315 to 334 are compositionally biased toward basic and acidic residues; it reads RAAERLDPTAEQRRRTDRER. The segment at 315 to 372 is disordered; it reads RAAERLDPTAEQRRRTDRERYRRRVRAMHQPGTGSAVRRPTPGDDGTGTDEEGEGHDS. Acidic residues predominate over residues 361 to 372; it reads TGTDEEGEGHDS.

This sequence belongs to the methyltransferase superfamily. RsmH family.

It localises to the cytoplasm. The catalysed reaction is cytidine(1402) in 16S rRNA + S-adenosyl-L-methionine = N(4)-methylcytidine(1402) in 16S rRNA + S-adenosyl-L-homocysteine + H(+). Specifically methylates the N4 position of cytidine in position 1402 (C1402) of 16S rRNA. This chain is Ribosomal RNA small subunit methyltransferase H, found in Salinispora arenicola (strain CNS-205).